Reading from the N-terminus, the 147-residue chain is Prefoldin subunit alpha (147 aa).

The protein belongs to the prefoldin alpha subunit family. As to quaternary structure, heterohexamer of two alpha and four beta subunits.

The protein resides in the cytoplasm. Its function is as follows. Molecular chaperone capable of stabilizing a range of proteins. Seems to fulfill an ATP-independent, HSP70-like function in archaeal de novo protein folding. This chain is Prefoldin subunit alpha, found in Saccharolobus islandicus (strain Y.N.15.51 / Yellowstone #2) (Sulfolobus islandicus).